The chain runs to 213 residues: Octanoyltransferase (213 aa).

Positions 32-207 constitute a BPL/LPL catalytic domain; sequence DSTLDEIWLV…NILALLNNPD (176 aa). Residues 71–78, 138–140, and 151–153 each bind substrate; these read RGGQVTYH, SLG, and GLA. The Acyl-thioester intermediate role is filled by Cys169.

It belongs to the LipB family.

Its subcellular location is the cytoplasm. The catalysed reaction is octanoyl-[ACP] + L-lysyl-[protein] = N(6)-octanoyl-L-lysyl-[protein] + holo-[ACP] + H(+). Its pathway is protein modification; protein lipoylation via endogenous pathway; protein N(6)-(lipoyl)lysine from octanoyl-[acyl-carrier-protein]: step 1/2. Functionally, catalyzes the transfer of endogenously produced octanoic acid from octanoyl-acyl-carrier-protein onto the lipoyl domains of lipoate-dependent enzymes. Lipoyl-ACP can also act as a substrate although octanoyl-ACP is likely to be the physiological substrate. The chain is Octanoyltransferase from Escherichia coli O8 (strain IAI1).